A 156-amino-acid polypeptide reads, in one-letter code: ATP synthase subunit b 2 (156 aa).

The chain crosses the membrane as a helical span at residues 6 to 26 (SMFGQAISFVIFVWLCMKYVW).

Belongs to the ATPase B chain family. F-type ATPases have 2 components, F(1) - the catalytic core - and F(0) - the membrane proton channel. F(1) has five subunits: alpha(3), beta(3), gamma(1), delta(1), epsilon(1). F(0) has three main subunits: a(1), b(2) and c(10-14). The alpha and beta chains form an alternating ring which encloses part of the gamma chain. F(1) is attached to F(0) by a central stalk formed by the gamma and epsilon chains, while a peripheral stalk is formed by the delta and b chains.

Its subcellular location is the cell inner membrane. Its function is as follows. F(1)F(0) ATP synthase produces ATP from ADP in the presence of a proton or sodium gradient. F-type ATPases consist of two structural domains, F(1) containing the extramembraneous catalytic core and F(0) containing the membrane proton channel, linked together by a central stalk and a peripheral stalk. During catalysis, ATP synthesis in the catalytic domain of F(1) is coupled via a rotary mechanism of the central stalk subunits to proton translocation. In terms of biological role, component of the F(0) channel, it forms part of the peripheral stalk, linking F(1) to F(0). This chain is ATP synthase subunit b 2, found in Vibrio campbellii (strain ATCC BAA-1116).